The sequence spans 346 residues: Selenocysteine Se-methyltransferase (346 aa).

In terms of domain architecture, Hcy-binding spans 13-330 (SMKELLKETG…TTIRAIHKRL (318 aa)). Cys-248, Cys-315, and Cys-316 together coordinate Zn(2+).

It depends on Zn(2+) as a cofactor. As to expression, expressed in roots, young leaves and florets, but not detected in plants not exposed to selenium.

The catalysed reaction is S-methyl-L-methionine + L-selenocysteine = Se-methyl-L-selenocysteine + L-methionine + H(+). With respect to regulation, inhibited by L-methionine. In terms of biological role, catalyzes the methylation of DL- and L-selenocysteine with S-methylmethionine as donor. Also methylates DL-homocysteine, DL- and L-cysteine in vitro. May be involved in selenium detoxification. In Brassica oleracea var. italica (Broccoli), this protein is Selenocysteine Se-methyltransferase (SMT).